Here is a 155-residue protein sequence, read N- to C-terminus: Transcriptional repressor NrdR (155 aa).

Residues 3–34 (CPNCHQNASRVIDSRPTDEGRTIRRRRECENC) fold into a zinc finger. In terms of domain architecture, ATP-cone spans 49 to 139 (LLVIKNDGTR…IYRQFTDMSS (91 aa)).

It belongs to the NrdR family. It depends on Zn(2+) as a cofactor.

In terms of biological role, negatively regulates transcription of bacterial ribonucleotide reductase nrd genes and operons by binding to NrdR-boxes. This Lactobacillus delbrueckii subsp. bulgaricus (strain ATCC 11842 / DSM 20081 / BCRC 10696 / JCM 1002 / NBRC 13953 / NCIMB 11778 / NCTC 12712 / WDCM 00102 / Lb 14) protein is Transcriptional repressor NrdR.